A 370-amino-acid chain; its full sequence is Mitogen-activated protein kinase 3 (370 aa).

The Protein kinase domain occupies Tyr32–Met319. Residues Ile38–Val46 and Lys61 each bind ATP. The active-site Proton acceptor is the Asp158. Phosphothreonine is present on Thr191. Residues Thr191–Tyr193 carry the TXY motif. Phosphotyrosine is present on Tyr193.

Belongs to the protein kinase superfamily. CMGC Ser/Thr protein kinase family. MAP kinase subfamily. Post-translationally, dually phosphorylated on Thr-191 and Tyr-193, which activates the enzyme.

The catalysed reaction is L-seryl-[protein] + ATP = O-phospho-L-seryl-[protein] + ADP + H(+). It carries out the reaction L-threonyl-[protein] + ATP = O-phospho-L-threonyl-[protein] + ADP + H(+). With respect to regulation, activated by threonine and tyrosine phosphorylation. This Oryza sativa subsp. japonica (Rice) protein is Mitogen-activated protein kinase 3 (MPK3).